Reading from the N-terminus, the 459-residue chain is WPP domain-interacting protein 3 (459 aa).

A compositionally biased stretch (polar residues) spans 1–17 (MNESVPDSVEDNGNSVP). Residues 1–78 (MNESVPDSVE…GPVRDEAAPV (78 aa)) form a disordered region. Basic residues predominate over residues 52-66 (STRKGFGLKKWRRIK). Short sequence motifs (nuclear localization signal) lie at residues 60-61 (KK) and 63-64 (RR). Over residues 67–78 (RDGPVRDEAAPV) the composition is skewed to basic and acidic residues. Residues 86 to 87 (KR) carry the Nuclear localization signal 3 motif. 2 disordered regions span residues 240–266 (KEEV…NNNH) and 308–330 (TDEL…TSSG). Positions 251–266 (NGNKEDDGESKKNNNH) are enriched in basic and acidic residues. Polar residues predominate over residues 308–319 (TDELSSDQPSHQ). A coiled-coil region spans residues 331 to 375 (SKALILKEKVKLLEHKLEEARAALEAKEARIQELENSKIESELEC). The KASH domain maps to 426–459 (KLGFYILTQLILLVSILRFLVLQFSPASRLVIPT). A helical transmembrane segment spans residues 427–447 (LGFYILTQLILLVSILRFLVL).

Component of Ran complexes at least composed of WIT1 or WIT2, RANGAP1 or RANGAP2, and WIP1 or WIP2 or WIP3. Interacts with RANGAP1, WPP1/MAF1, and WPP2/MAF2. Interacts with SUN1 and SUN2. Core component of the LINC complex which is composed of inner nuclear membrane SUN domain-containing proteins coupled to outer nuclear membrane WIP and WIT proteins. The LINC complex also involves nucleoskeletal proteins CRWN/LINC and possibly KAKU4 and the cytoskeletal myosin KAKU1. Interacts with WIT2. In terms of tissue distribution, expressed in seedlings, roots, stems, leaves, and flowers.

It is found in the nucleus envelope. It localises to the nucleus membrane. In terms of biological role, mediates and enhances the nuclear envelope docking of RANGAP proteins mediated by WIT1 and WIT2 in the undifferentiated cells of root tips. As component of the SUN-WIP-WIT2-KAKU1 complex, mediates the transfer of cytoplasmic forces to the nuclear envelope (NE), leading to nuclear shape changes. In Arabidopsis thaliana (Mouse-ear cress), this protein is WPP domain-interacting protein 3 (WIP3).